A 2485-amino-acid chain; its full sequence is Probable polyketide synthase 10 (2485 aa).

Residues 8–447 (EDDIAIIGVG…GANCCIILSE (440 aa)) form the Ketosynthase family 3 (KS3) domain. Catalysis depends on for beta-ketoacyl synthase activity residues Cys-184, His-325, and His-363. Positions 636 to 669 (GIEASFIVGHSLGEISAAHCSGMIDLETLCYIIY) are acyl/malonyl transferase. The For acyl/malonyl transferase activity role is filled by Ser-646. Residues 930 to 1054 (PPITILGNES…GNFHISNNLF (125 aa)) are N-terminal hotdog fold. Residues 930–1220 (PPITILGNES…SKSLTPIQDP (291 aa)) form the PKS/mFAS DH domain. The active-site Proton acceptor; for dehydratase activity is His-964. Positions 1071–1220 (NYSLIERDDL…SKSLTPIQDP (150 aa)) are C-terminal hotdog fold. The active-site Proton donor; for dehydratase activity is Asp-1134. The region spanning 2410–2485 (ESNKGIDGLL…NQLIKFLNKK (76 aa)) is the Carrier domain. At Ser-2447 the chain carries O-(pantetheine 4'-phosphoryl)serine.

Pantetheine 4'-phosphate is required as a cofactor.

Functionally, probable polyketide synthase. This Dictyostelium discoideum (Social amoeba) protein is Probable polyketide synthase 10 (pks10).